The chain runs to 1174 residues: Nucleolar complex protein 1 (1174 aa).

Disordered stretches follow at residues 1–20, 29–237, 715–742, 893–922, 944–1085, and 1116–1174; these read MPAA…NKKI, VVKQ…EESQ, YEDV…VKSS, AQNK…LKEG, GVDE…GGRS, and VKGQ…KRKH. Over residues 33 to 63 the composition is skewed to basic and acidic residues; that stretch reads NKKEHPQRPKFEGKEQVKKPQKIKFGEDGKA. Polar residues predominate over residues 95–104; the sequence is ASKSFNQNHK. Basic and acidic residues-rich tracts occupy residues 113-122 and 176-200; these read KFGEDREAVH and KFGD…EDGA. Acidic residues-rich tracts occupy residues 207–216 and 715–724; these read SDGDSDEELG and YEDVKDEADD. Composition is skewed to basic and acidic residues over residues 725 to 739 and 897 to 906; these read TKDS…DNDV and KQKEIKKDAA. Composition is skewed to acidic residues over residues 907-916, 945-954, 981-1038, and 1048-1065; these read EEGDDGEAGE, VDEEQDEEEL, AEDE…DEGS, and DSSD…DDED. Over residues 1127-1143 the composition is skewed to basic and acidic residues; that stretch reads NKDKSSDKQLKWEENRR. A compositionally biased stretch (low complexity) spans 1156 to 1166; sequence GKPAAKGGRPQ.

It belongs to the CBF/MAK21 family.

It is found in the nucleus. It localises to the nucleolus. Involved in rRNA processing and ribosome maturation. May also act as a transcription factor. The protein is Nucleolar complex protein 1 of Drosophila melanogaster (Fruit fly).